The sequence spans 245 residues: Oncostatin-M (245 aa).

An N-terminal signal peptide occupies residues 1–26 (MGAQRMQRTLLSLVLRLLLLCTVATG). 2 disulfide bridges follow: C28–C135 and C71–C177. The N-linked (GlcNAc...) asparagine glycan is linked to N97. Disordered stretches follow at residues 143–171 (SSDP…STFQ) and 197–245 (WGER…APAR). Positions 153–166 (QPGPGPTPLPPTPP) are enriched in pro residues. Positions 203–218 (RSRRHSPCRALKRGAR) are enriched in basic residues. A propeptide spanning residues 207–245 (HSPCRALKRGARRTQPFPEIRRLAPRGQPPGSLWGAPAR) is cleaved from the precursor.

Belongs to the LIF/OSM family. In terms of processing, propeptide processing is not important for receptor binding activity but may be important growth-inhibitory activity.

Its subcellular location is the secreted. In terms of biological role, growth regulator. Inhibits the proliferation of a number of tumor cell lines. It regulates cytokine production, including IL-6, G-CSF and GM-CSF from endothelial cells. Uses both type I OSM receptor (heterodimers composed of LIFR and IL6ST) and type II OSM receptor (heterodimers composed of OSMR and IL6ST). Involved in the maturation of fetal hepatocytes, thereby promoting liver development and regeneration. This Bos taurus (Bovine) protein is Oncostatin-M (OSM).